The sequence spans 342 residues: Manganese-dependent ADP-ribose/CDP-alcohol diphosphatase (342 aa).

Residues D18, Q20, D67, N103, H239, H276, and H278 each contribute to the Zn(2+) site.

This sequence belongs to the ADPRibase-Mn family. In terms of assembly, monomer. It depends on Mg(2+) as a cofactor.

The enzyme catalyses CDP-choline + H2O = phosphocholine + CMP + 2 H(+). It carries out the reaction ADP-D-ribose + H2O = D-ribose 5-phosphate + AMP + 2 H(+). The catalysed reaction is CDP-glycerol + H2O = sn-glycerol 3-phosphate + CMP + 2 H(+). In terms of biological role, hydrolyzes ADP-ribose, IDP-ribose, CDP-glycerol, CDP-choline and CDP-ethanolamine, but not other non-reducing ADP-sugars or CDP-glucose. This Xenopus tropicalis (Western clawed frog) protein is Manganese-dependent ADP-ribose/CDP-alcohol diphosphatase (adprm).